We begin with the raw amino-acid sequence, 88 residues long: Secretion system apparatus protein SsaS (88 aa).

A run of 2 helical transmembrane segments spans residues 15–35 (WIVL…GVIV) and 55–75 (LLAI…ILLN).

The protein belongs to the FliQ/MopD/SpaQ family.

It localises to the cell membrane. Its function is as follows. Part of a type III secretion system. The polypeptide is Secretion system apparatus protein SsaS (ssaS) (Salmonella typhimurium (strain LT2 / SGSC1412 / ATCC 700720)).